A 651-amino-acid chain; its full sequence is Acetyl-coenzyme A synthetase 1 (651 aa).

CoA contacts are provided by residues Arg191–Lys194, Thr311, and Asn335. Residues Gly387–Pro389, Asp411–Thr416, Asp500, and Arg515 each bind ATP. Ser523 serves as a coordination point for CoA. Arg526 contributes to the ATP binding site. Mg(2+) contacts are provided by Val537, His539, and Val542. Arg584 lines the CoA pocket. At Lys609 the chain carries N6-acetyllysine.

The protein belongs to the ATP-dependent AMP-binding enzyme family. Mg(2+) serves as cofactor. Post-translationally, acetylated. Deacetylation by the SIR2-homolog deacetylase activates the enzyme.

It carries out the reaction acetate + ATP + CoA = acetyl-CoA + AMP + diphosphate. Catalyzes the conversion of acetate into acetyl-CoA (AcCoA), an essential intermediate at the junction of anabolic and catabolic pathways. AcsA undergoes a two-step reaction. In the first half reaction, AcsA combines acetate with ATP to form acetyl-adenylate (AcAMP) intermediate. In the second half reaction, it can then transfer the acetyl group from AcAMP to the sulfhydryl group of CoA, forming the product AcCoA. The protein is Acetyl-coenzyme A synthetase 1 of Pseudomonas aeruginosa (strain ATCC 15692 / DSM 22644 / CIP 104116 / JCM 14847 / LMG 12228 / 1C / PRS 101 / PAO1).